The chain runs to 263 residues: Small ribosomal subunit protein eS4 (263 aa).

The 63-residue stretch at 42–104 folds into the S4 RNA-binding domain; the sequence is LPLVIFLRNR…TNELFRLIYD (63 aa).

This sequence belongs to the eukaryotic ribosomal protein eS4 family.

The protein is Small ribosomal subunit protein eS4 (RpS4) of Spodoptera frugiperda (Fall armyworm).